The primary structure comprises 220 residues: Redox-sensing transcriptional repressor Rex (220 aa).

The segment at residues 25–64 is a DNA-binding region (H-T-H motif); the sequence is WYLSNVKLLKQKGERYVSSTQISKEINIDASQIAKDLSYV. 99-104 is an NAD(+) binding site; sequence GVGSLG.

The protein belongs to the transcriptional regulatory Rex family. Homodimer.

The protein localises to the cytoplasm. In terms of biological role, modulates transcription in response to changes in cellular NADH/NAD(+) redox state. The polypeptide is Redox-sensing transcriptional repressor Rex (Bacteroides fragilis (strain ATCC 25285 / DSM 2151 / CCUG 4856 / JCM 11019 / LMG 10263 / NCTC 9343 / Onslow / VPI 2553 / EN-2)).